We begin with the raw amino-acid sequence, 402 residues long: tRNA(Met) cytidine acetate ligase (402 aa).

ATP is bound by residues 7–20, Gly-102, Asn-171, and Arg-196; that span reads ITEYNPFHLGHELH.

This sequence belongs to the TmcAL family.

The protein localises to the cytoplasm. It carries out the reaction cytidine(34) in elongator tRNA(Met) + acetate + ATP = N(4)-acetylcytidine(34) in elongator tRNA(Met) + AMP + diphosphate. In terms of biological role, catalyzes the formation of N(4)-acetylcytidine (ac(4)C) at the wobble position of elongator tRNA(Met), using acetate and ATP as substrates. First activates an acetate ion to form acetyladenylate (Ac-AMP) and then transfers the acetyl group to tRNA to form ac(4)C34. The protein is tRNA(Met) cytidine acetate ligase of Clostridium perfringens (strain ATCC 13124 / DSM 756 / JCM 1290 / NCIMB 6125 / NCTC 8237 / Type A).